Here is a 131-residue protein sequence, read N- to C-terminus: MAAAVAMETDDAGNRLRFQLELEFVQCLANPNYLNFLAQRGYFKDKAFVNYLKYLLYWKEPEYAKYLKYPQCLHMLELLQYEHFRKELVNAQCAKFIDEQQILHWQHYSRKRVRLQQALAEQQQQNNTAGK.

Position 2 is an N-acetylalanine (Ala2).

It belongs to the Mediator complex subunit 31 family. In terms of assembly, component of the Mediator complex, which is composed of MED1, MED4, MED6, MED7, MED8, MED9, MED10, MED11, MED12, MED13, MED13L, MED14, MED15, MED16, MED17, MED18, MED19, MED20, MED21, MED22, MED23, MED24, MED25, MED26, MED27, MED29, MED30, MED31, CCNC, CDK8 and CDC2L6/CDK11. The MED12, MED13, CCNC and CDK8 subunits form a distinct module termed the CDK8 module. Mediator containing the CDK8 module is less active than Mediator lacking this module in supporting transcriptional activation. Individual preparations of the Mediator complex lacking one or more distinct subunits have been variously termed ARC, CRSP, DRIP, PC2, SMCC and TRAP.

The protein resides in the nucleus. Component of the Mediator complex, a coactivator involved in the regulated transcription of nearly all RNA polymerase II-dependent genes. Mediator functions as a bridge to convey information from gene-specific regulatory proteins to the basal RNA polymerase II transcription machinery. Mediator is recruited to promoters by direct interactions with regulatory proteins and serves as a scaffold for the assembly of a functional preinitiation complex with RNA polymerase II and the general transcription factors. The polypeptide is Mediator of RNA polymerase II transcription subunit 31 (Med31) (Mus musculus (Mouse)).